A 527-amino-acid polypeptide reads, in one-letter code: Bifunctional purine biosynthesis protein PurH (527 aa).

The MGS-like domain occupies 1-149 (MASDFLPVRR…KNFARVAVAT (149 aa)).

This sequence belongs to the PurH family.

It catalyses the reaction (6R)-10-formyltetrahydrofolate + 5-amino-1-(5-phospho-beta-D-ribosyl)imidazole-4-carboxamide = 5-formamido-1-(5-phospho-D-ribosyl)imidazole-4-carboxamide + (6S)-5,6,7,8-tetrahydrofolate. The enzyme catalyses IMP + H2O = 5-formamido-1-(5-phospho-D-ribosyl)imidazole-4-carboxamide. It participates in purine metabolism; IMP biosynthesis via de novo pathway; 5-formamido-1-(5-phospho-D-ribosyl)imidazole-4-carboxamide from 5-amino-1-(5-phospho-D-ribosyl)imidazole-4-carboxamide (10-formyl THF route): step 1/1. It functions in the pathway purine metabolism; IMP biosynthesis via de novo pathway; IMP from 5-formamido-1-(5-phospho-D-ribosyl)imidazole-4-carboxamide: step 1/1. This Xanthomonas euvesicatoria pv. vesicatoria (strain 85-10) (Xanthomonas campestris pv. vesicatoria) protein is Bifunctional purine biosynthesis protein PurH.